The sequence spans 99 residues: Large ribosomal subunit protein bL27 (99 aa).

The interval alanine 13 to glycine 65 is disordered.

The protein belongs to the bacterial ribosomal protein bL27 family.

This is Large ribosomal subunit protein bL27 from Lactobacillus delbrueckii subsp. bulgaricus (strain ATCC BAA-365 / Lb-18).